The primary structure comprises 1065 residues: Carbamoyl phosphate synthase large chain (1065 aa).

Residues 1 to 401 are carboxyphosphate synthetic domain; it reads MPKRRDIETI…SLLKAVRSLE (401 aa). R129, R169, G175, G176, R208, I210, E215, G241, I242, H243, Q284, and E298 together coordinate ATP. The ATP-grasp 1 domain maps to 133-327; sequence RALMNELGEP…IAKLAAKIAV (195 aa). Positions 284, 298, and 300 each coordinate Mg(2+). Positions 284, 298, and 300 each coordinate Mn(2+). An oligomerization domain region spans residues 402–546; sequence IGVHHLELNE…YSTYEEENES (145 aa). Residues 547-929 are carbamoyl phosphate synthetic domain; that stretch reads IVTEKPSVIV…ALYKGLVASG (383 aa). The ATP-grasp 2 domain occupies 671 to 861; that stretch reads EQALSELGIP…MANLATKAIL (191 aa). 10 residues coordinate ATP: R707, R746, I748, E752, G777, V778, H779, S780, Q820, and E832. Mg(2+) is bound by residues Q820, E832, and N834. Positions 820, 832, and 834 each coordinate Mn(2+). The MGS-like domain occupies 930 to 1065; sequence IHIQPHGAVL…TAMTEGLVRS (136 aa). Residues 930–1065 are allosteric domain; the sequence is IHIQPHGAVL…TAMTEGLVRS (136 aa).

The protein belongs to the CarB family. In terms of assembly, composed of two chains; the small (or glutamine) chain promotes the hydrolysis of glutamine to ammonia, which is used by the large (or ammonia) chain to synthesize carbamoyl phosphate. Tetramer of heterodimers (alpha,beta)4. Mg(2+) is required as a cofactor. Mn(2+) serves as cofactor.

It carries out the reaction hydrogencarbonate + L-glutamine + 2 ATP + H2O = carbamoyl phosphate + L-glutamate + 2 ADP + phosphate + 2 H(+). The catalysed reaction is hydrogencarbonate + NH4(+) + 2 ATP = carbamoyl phosphate + 2 ADP + phosphate + 2 H(+). It functions in the pathway amino-acid biosynthesis; L-arginine biosynthesis; carbamoyl phosphate from bicarbonate: step 1/1. The protein operates within pyrimidine metabolism; UMP biosynthesis via de novo pathway; (S)-dihydroorotate from bicarbonate: step 1/3. In terms of biological role, large subunit of the glutamine-dependent carbamoyl phosphate synthetase (CPSase). CPSase catalyzes the formation of carbamoyl phosphate from the ammonia moiety of glutamine, carbonate, and phosphate donated by ATP, constituting the first step of 2 biosynthetic pathways, one leading to arginine and/or urea and the other to pyrimidine nucleotides. The large subunit (synthetase) binds the substrates ammonia (free or transferred from glutamine from the small subunit), hydrogencarbonate and ATP and carries out an ATP-coupled ligase reaction, activating hydrogencarbonate by forming carboxy phosphate which reacts with ammonia to form carbamoyl phosphate. In Bacillus caldolyticus, this protein is Carbamoyl phosphate synthase large chain.